The chain runs to 276 residues: D-aminoacyl-tRNA deacylase (276 aa).

Belongs to the DtdA deacylase family. In terms of assembly, monomer. It depends on Zn(2+) as a cofactor.

It carries out the reaction a D-aminoacyl-tRNA + H2O = a tRNA + a D-alpha-amino acid + H(+). The catalysed reaction is glycyl-tRNA(Ala) + H2O = tRNA(Ala) + glycine + H(+). D-aminoacyl-tRNA deacylase with broad substrate specificity. By recycling D-aminoacyl-tRNA to D-amino acids and free tRNA molecules, this enzyme counteracts the toxicity associated with the formation of D-aminoacyl-tRNA entities in vivo. In Korarchaeum cryptofilum (strain OPF8), this protein is D-aminoacyl-tRNA deacylase.